Consider the following 164-residue polypeptide: MEQSSLLLKKQLADMRRVPVDGFSAGLVDDNDIYKWEVLVIGPPDTLYEGGFFKAILDFPRDYPQKPPKMKFISEIWHPNIDKEGNVCISILHDPGDDKWGYERPEERWLPVHTVETILLSVISMLTDPNFESPANVDAAKMQRENYAEFKKKVAQCVRRSQEE.

The 161-residue stretch at 3-163 (QSSLLLKKQL…VAQCVRRSQE (161 aa)) folds into the UBC core domain. Cys-88 acts as the Glycyl thioester intermediate in catalysis.

It belongs to the ubiquitin-conjugating enzyme family.

It carries out the reaction S-ubiquitinyl-[E1 ubiquitin-activating enzyme]-L-cysteine + [E2 ubiquitin-conjugating enzyme]-L-cysteine = [E1 ubiquitin-activating enzyme]-L-cysteine + S-ubiquitinyl-[E2 ubiquitin-conjugating enzyme]-L-cysteine.. The protein operates within protein modification; protein ubiquitination. Functionally, catalyzes the covalent attachment of ubiquitin to other proteins. The sequence is that of Probable ubiquitin-conjugating enzyme E2 7 (ubc-7) from Caenorhabditis elegans.